The chain runs to 245 residues: tRNA (guanine-N(1)-)-methyltransferase (245 aa).

Residues glycine 113 and 133–138 (IGDYVL) each bind S-adenosyl-L-methionine.

It belongs to the RNA methyltransferase TrmD family. In terms of assembly, homodimer.

The protein resides in the cytoplasm. The catalysed reaction is guanosine(37) in tRNA + S-adenosyl-L-methionine = N(1)-methylguanosine(37) in tRNA + S-adenosyl-L-homocysteine + H(+). Functionally, specifically methylates guanosine-37 in various tRNAs. The protein is tRNA (guanine-N(1)-)-methyltransferase of Histophilus somni (strain 129Pt) (Haemophilus somnus).